Here is a 596-residue protein sequence, read N- to C-terminus: Histone deacetylase 9 (596 aa).

2 stretches are compositionally biased toward basic and acidic residues: residues 132–153 (REKE…HRQE) and 160–172 (RSKD…AVAS). 4 disordered regions span residues 132-172 (REKE…AVAS), 214-258 (HTSL…VRSR), 293-313 (SSVS…GPVA), and 522-596 (QPEG…QQVT). The segment at 172-222 (STEVKQKLQEFILSKSATKEPLTNGTSHSMGRHPKLWYTAAHHTSLDQSSP) is interaction with mef2. The span at 221-237 (SPPPSGTSPTYKCPPPG) shows a compositional bias: pro residues. The span at 293 to 312 (SSVSSSSPVSGPSSPNNGPV) shows a compositional bias: low complexity. Basic and acidic residues predominate over residues 522 to 536 (QPEGHLEEAEEDLHG). Positions 541–558 (QEKSSSIDNTRSYSSTDL) are enriched in polar residues. Basic and acidic residues predominate over residues 567-585 (KVKEEPPDSENEIKTHLQS). Polar residues predominate over residues 586 to 596 (EQKSVFAQQVT).

This sequence belongs to the histone deacetylase family. HD type 2 subfamily. Homodimer. Interacts with mef2. As to expression, broadly expressed.

The protein resides in the nucleus. It carries out the reaction N(6)-acetyl-L-lysyl-[histone] + H2O = L-lysyl-[histone] + acetate. Its function is as follows. Devoided of intrinsic deacetylase activity, promotes the deacetylation of lysine residues on the N-terminal part of the core histones (H2A, H2B, H3 and H4) by recruiting other histone deacetylases. Histone deacetylation gives a tag for epigenetic repression and plays an important role in transcriptional regulation, cell cycle progression and developmental events. Represses MEF2-dependent transcription. The polypeptide is Histone deacetylase 9 (hdac9) (Xenopus laevis (African clawed frog)).